The sequence spans 387 residues: MSAVSVYPMCVRASRGLLRLRQGARCSTAPPLLDVVRPLSADTSSSSATGGLAQAILQERLQQQQKSQEQPPPEGEDSGHKQDEQGEDKKQKENTAYAKKMVLRLAGIMGLGGTVGIVYIFGSNSVDEQGNKIPDEFDNDVPVIQQLRRTFKYFKDYRQMIIEPTSPKLLPDPLREPYYQPPYTLVLELTDVLLHPEWSLATGWRFKKRPGIDYLFQQLAPLYEIVIFTSETGMTAYPLIDSIDPQGFVMYRLFRDATRYMEGHHVKDVSCLNRDTSKVIVVDCKREAFGLQPFNGLALCKWDGNSEDRTLYDLAAFLKTIATSGVEDVRSVLENYAHEEDPIEAFKRRQAQLAREEEQRISEMAQQKKQGFSLGTIAGRFWSRKQQ.

Residues 1–26 (MSAVSVYPMCVRASRGLLRLRQGARC) constitute a mitochondrion transit peptide. The Mitochondrial matrix segment spans residues 27-100 (STAPPLLDVV…QKENTAYAKK (74 aa)). The segment at 61–93 (LQQQQKSQEQPPPEGEDSGHKQDEQGEDKKQKE) is disordered. Residues 77–93 (DSGHKQDEQGEDKKQKE) show a composition bias toward basic and acidic residues. The helical transmembrane segment at 101–121 (MVLRLAGIMGLGGTVGIVYIF) threads the bilayer. Residues 122-387 (GSNSVDEQGN…AGRFWSRKQQ (266 aa)) lie on the Mitochondrial intermembrane side of the membrane. In terms of domain architecture, FCP1 homology spans 178–321 (YYQPPYTLVL…YDLAAFLKTI (144 aa)).

Belongs to the TIM50 family. In terms of assembly, component of the TIM23 complex at least composed of timm23, timm17 and timm50.

The protein localises to the mitochondrion inner membrane. Its function is as follows. Essential component of the TIM23 complex, a complex that mediates the translocation of transit peptide-containing proteins across the mitochondrial inner membrane. The protein is Mitochondrial import inner membrane translocase subunit TIM50 (timm50) of Danio rerio (Zebrafish).